Here is a 265-residue protein sequence, read N- to C-terminus: Isoprenyl transferase (265 aa).

Aspartate 35 is a catalytic residue. Aspartate 35 provides a ligand contact to Mg(2+). Substrate contacts are provided by residues 36 to 39 (GNGR), tryptophan 40, arginine 48, histidine 52, and 80 to 82 (STE). Asparagine 83 (proton acceptor) is an active-site residue. Substrate-binding positions include tryptophan 84, arginine 86, arginine 203, and 209–211 (RIS). Glutamate 222 lines the Mg(2+) pocket.

It belongs to the UPP synthase family. In terms of assembly, homodimer. It depends on Mg(2+) as a cofactor.

In terms of biological role, catalyzes the condensation of isopentenyl diphosphate (IPP) with allylic pyrophosphates generating different type of terpenoids. In Prochlorococcus marinus (strain MIT 9313), this protein is Isoprenyl transferase.